Reading from the N-terminus, the 408-residue chain is Acetylornithine aminotransferase (408 aa).

Pyridoxal 5'-phosphate contacts are provided by residues 107–108 and Phe141; that span reads GT. A N(2)-acetyl-L-ornithine-binding site is contributed by Arg144. 227–230 is a binding site for pyridoxal 5'-phosphate; that stretch reads DEIQ. Position 256 is an N6-(pyridoxal phosphate)lysine (Lys256). N(2)-acetyl-L-ornithine is bound at residue Thr284. Thr285 provides a ligand contact to pyridoxal 5'-phosphate.

The protein belongs to the class-III pyridoxal-phosphate-dependent aminotransferase family. ArgD subfamily. As to quaternary structure, homodimer. Requires pyridoxal 5'-phosphate as cofactor.

The protein localises to the cytoplasm. It carries out the reaction N(2)-acetyl-L-ornithine + 2-oxoglutarate = N-acetyl-L-glutamate 5-semialdehyde + L-glutamate. Its pathway is amino-acid biosynthesis; L-arginine biosynthesis; N(2)-acetyl-L-ornithine from L-glutamate: step 4/4. This is Acetylornithine aminotransferase from Xanthomonas axonopodis pv. citri (strain 306).